Consider the following 333-residue polypeptide: uncharacterized protein (333 aa).

The protein belongs to the proline racemase family.

This is an uncharacterized protein from Vibrio parahaemolyticus serotype O3:K6 (strain RIMD 2210633).